The sequence spans 371 residues: Integrator complex assembly factor WDR73 (371 aa).

WD repeat units lie at residues 81–121, 273–313, and 333–371; these read FSDR…DVIE, SPDP…GKKT, and DSAP…LQAS.

This sequence belongs to the WD repeat WDR73 family. In terms of assembly, interacts with INTS9 and INTS11; the interaction is direct. Part of the multiprotein complex composed of BRAT1, WDR73, as well as integrator complex subunits INTS9 and INTS11.

The protein localises to the cytoplasm. The protein resides in the cytoskeleton. It localises to the spindle. Its subcellular location is the spindle pole. It is found in the cleavage furrow. Component of a multiprotein complex required for the assembly of the RNA endonuclease module of the integrator complex. Associates with INTS9 and INTS11 in the cytoplasm, stabilizing the INTS9-INTS11 heterodimer and blocking the active site of INTS11. BRAT1 then joins the complex and plugs the active site of INTS11, leading to WDR73 release and nuclear import of INTS9 and INTS11. The polypeptide is Integrator complex assembly factor WDR73 (Wdr73) (Mus musculus (Mouse)).